Here is a 496-residue protein sequence, read N- to C-terminus: Apolipoprotein N-acyltransferase (496 aa).

6 helical membrane-spanning segments follow: residues 23-43 (GIATSTHFWLLFMPLSLFILW), 50-70 (LANFLWGFFFILVSHSWLYEL), 84-104 (LIISISILFGCSIIGGILVYL), 126-146 (LTIKVLLLSFAWGIGEFILSQ), 171-191 (WIGASGLCVVQLTIGFWIYLI), and 205-225 (FLFGLLILVILHFLGGLTNPI). The CN hydrolase domain maps to 236–464 (WQTNMPTREK…NDVVNPNFSI (229 aa)). The active-site Proton acceptor is Glu-276. Lys-325 is an active-site residue. Catalysis depends on Cys-374, which acts as the Nucleophile. Residues 476 to 496 (PLFLLCLFLIGLNLYFGKFTN) form a helical membrane-spanning segment.

Belongs to the CN hydrolase family. Apolipoprotein N-acyltransferase subfamily.

It is found in the cell inner membrane. It carries out the reaction N-terminal S-1,2-diacyl-sn-glyceryl-L-cysteinyl-[lipoprotein] + a glycerophospholipid = N-acyl-S-1,2-diacyl-sn-glyceryl-L-cysteinyl-[lipoprotein] + a 2-acyl-sn-glycero-3-phospholipid + H(+). It functions in the pathway protein modification; lipoprotein biosynthesis (N-acyl transfer). Functionally, catalyzes the phospholipid dependent N-acylation of the N-terminal cysteine of apolipoprotein, the last step in lipoprotein maturation. The polypeptide is Apolipoprotein N-acyltransferase (Prochlorococcus marinus subsp. pastoris (strain CCMP1986 / NIES-2087 / MED4)).